The sequence spans 344 residues: Sensor histidine kinase GraS (344 aa).

The next 2 helical transmembrane spans lie at I18–I38 and I43–L63. The 207-residue stretch at E126–N332 folds into the Histidine kinase domain. H129 is subject to Phosphohistidine; by autocatalysis.

Autophosphorylated.

The protein localises to the cell membrane. It carries out the reaction ATP + protein L-histidine = ADP + protein N-phospho-L-histidine.. In terms of biological role, member of the two-component regulatory system GraR/GraS involved in resistance against cationic antimicrobial peptides (CAMPs). GraS probably functions as a sensor protein kinase which is autophosphorylated at a histidine residue and transfers its phosphate group to GraR. The sequence is that of Sensor histidine kinase GraS (graS) from Staphylococcus haemolyticus (strain JCSC1435).